A 362-amino-acid chain; its full sequence is Prostaglandin E2 receptor EP2 subtype (362 aa).

Residues 1 to 24 (MDNFLNDSKLMEDCKSRQWLLSGE) lie on the Extracellular side of the membrane. N-linked (GlcNAc...) asparagine glycosylation is present at Asn-6. The chain crosses the membrane as a helical span at residues 25 to 48 (SPAISSVMFSAGVLGNLIALALLA). The Cytoplasmic portion of the chain corresponds to 49–66 (RRWRGDTGCSAGSRTSIS). A helical transmembrane segment spans residues 67-92 (LFHVLVTELVLTDLLGTCLISPVVLA). Residues 93 to 112 (SYSRNQTLVALAPESHACTY) are Extracellular-facing. A disulfide bridge connects residues Cys-110 and Cys-188. Residues 113–133 (FAFTMTFFSLATMLMLFAMAL) form a helical membrane-spanning segment. The Cytoplasmic portion of the chain corresponds to 134 to 152 (ERYLSIGYPYFYRRHLSRR). Residues 153–177 (GGLAVLPVIYGASLLFCSLPLLNYG) form a helical membrane-spanning segment. Over 178 to 199 (EYVQYCPGTWCFIRHGRTAYLQ) the chain is Extracellular. The helical transmembrane segment at 200–224 (LYATMLLLLIVAVLACNISVILNLI) threads the bilayer. At 225-262 (RMHRRSRRSRCGLSGSSLRGPGSRRRGERTSMAEETDH) the chain is on the cytoplasmic side. A disordered region spans residues 234–255 (RCGLSGSSLRGPGSRRRGERTS). Residues 235-245 (CGLSGSSLRGP) are compositionally biased toward low complexity. A helical transmembrane segment spans residues 263 to 286 (LILLAIMTITFAICSLPFTIFAYM). The Extracellular portion of the chain corresponds to 287–299 (DETSSLKEKWDLR). A helical membrane pass occupies residues 300–323 (ALRFLSVNSIIDPWVFAILRPPVL). The Cytoplasmic portion of the chain corresponds to 324–362 (RLMRSVLCCRTSLRTQEAQQTSCSTQSSASKQTDLCGQL).

This sequence belongs to the G-protein coupled receptor 1 family.

The protein resides in the cell membrane. Receptor for prostaglandin E2 (PGE2). The activity of this receptor is mediated by G(s) proteins that stimulate adenylate cyclase. The subsequent raise in intracellular cAMP is responsible for the relaxing effect of this receptor on smooth muscle. This chain is Prostaglandin E2 receptor EP2 subtype (Ptger2), found in Mus musculus (Mouse).